Here is a 168-residue protein sequence, read N- to C-terminus: Protein-export protein SecB (168 aa).

Belongs to the SecB family. In terms of assembly, homotetramer, a dimer of dimers. One homotetramer interacts with 1 SecA dimer.

The protein resides in the cytoplasm. One of the proteins required for the normal export of preproteins out of the cell cytoplasm. It is a molecular chaperone that binds to a subset of precursor proteins, maintaining them in a translocation-competent state. It also specifically binds to its receptor SecA. The sequence is that of Protein-export protein SecB from Thioalkalivibrio sulfidiphilus (strain HL-EbGR7).